The chain runs to 312 residues: Methionyl-tRNA formyltransferase (312 aa).

107–110 (SLLP) is a (6S)-5,6,7,8-tetrahydrofolate binding site.

Belongs to the Fmt family.

The catalysed reaction is L-methionyl-tRNA(fMet) + (6R)-10-formyltetrahydrofolate = N-formyl-L-methionyl-tRNA(fMet) + (6S)-5,6,7,8-tetrahydrofolate + H(+). Its function is as follows. Attaches a formyl group to the free amino group of methionyl-tRNA(fMet). The formyl group appears to play a dual role in the initiator identity of N-formylmethionyl-tRNA by promoting its recognition by IF2 and preventing the misappropriation of this tRNA by the elongation apparatus. The chain is Methionyl-tRNA formyltransferase from Borreliella burgdorferi (strain ZS7) (Borrelia burgdorferi).